The primary structure comprises 479 residues: Poly(A) polymerase catalytic subunit (479 aa).

Active-site residues include D202 and D204. Ca(2+) is bound by residues D202, D204, and D253.

Belongs to the poxviridae poly(A) polymerase catalytic subunit family. Heterodimer of a large (catalytic) subunit and a small (regulatory) subunit.

It catalyses the reaction RNA(n) + ATP = RNA(n)-3'-adenine ribonucleotide + diphosphate. Functionally, polymerase that creates the 3'-poly(A) tail of mRNA's. The protein is Poly(A) polymerase catalytic subunit (OPG063) of Bos taurus (Bovine).